The chain runs to 238 residues: Ribonuclease PH (238 aa).

Residues Arg-86 and 124 to 126 (GTR) contribute to the phosphate site.

Belongs to the RNase PH family. In terms of assembly, homohexameric ring arranged as a trimer of dimers.

The catalysed reaction is tRNA(n+1) + phosphate = tRNA(n) + a ribonucleoside 5'-diphosphate. In terms of biological role, phosphorolytic 3'-5' exoribonuclease that plays an important role in tRNA 3'-end maturation. Removes nucleotide residues following the 3'-CCA terminus of tRNAs; can also add nucleotides to the ends of RNA molecules by using nucleoside diphosphates as substrates, but this may not be physiologically important. Probably plays a role in initiation of 16S rRNA degradation (leading to ribosome degradation) during starvation. The sequence is that of Ribonuclease PH from Yersinia enterocolitica serotype O:8 / biotype 1B (strain NCTC 13174 / 8081).